A 201-amino-acid chain; its full sequence is Recombination protein RecR (201 aa).

The C4-type zinc finger occupies 57 to 72; sequence CADCRTFTEQEVCNIC. The Toprim domain occupies 81-176; it reads GQICVVESPA…EASRIAHGVP (96 aa).

It belongs to the RecR family.

May play a role in DNA repair. It seems to be involved in an RecBC-independent recombinational process of DNA repair. It may act with RecF and RecO. The polypeptide is Recombination protein RecR (Escherichia coli O6:K15:H31 (strain 536 / UPEC)).